A 225-amino-acid chain; its full sequence is NAD(P)H-quinone oxidoreductase subunit K, chloroplastic (225 aa).

[4Fe-4S] cluster contacts are provided by Cys43, Cys44, Cys108, and Cys139.

The protein belongs to the complex I 20 kDa subunit family. In terms of assembly, NDH is composed of at least 16 different subunits, 5 of which are encoded in the nucleus. [4Fe-4S] cluster is required as a cofactor.

It is found in the plastid. Its subcellular location is the chloroplast thylakoid membrane. The catalysed reaction is a plastoquinone + NADH + (n+1) H(+)(in) = a plastoquinol + NAD(+) + n H(+)(out). It carries out the reaction a plastoquinone + NADPH + (n+1) H(+)(in) = a plastoquinol + NADP(+) + n H(+)(out). In terms of biological role, NDH shuttles electrons from NAD(P)H:plastoquinone, via FMN and iron-sulfur (Fe-S) centers, to quinones in the photosynthetic chain and possibly in a chloroplast respiratory chain. The immediate electron acceptor for the enzyme in this species is believed to be plastoquinone. Couples the redox reaction to proton translocation, and thus conserves the redox energy in a proton gradient. This is NAD(P)H-quinone oxidoreductase subunit K, chloroplastic from Lolium perenne (Perennial ryegrass).